Consider the following 593-residue polypeptide: Efflux pump FUBT (593 aa).

The interval 1–44 is disordered; the sequence is MAIDPQPSSPSLSSETIANDTIGNDNNVNEPSVEPKTQENQHTV. Polar residues predominate over residues 9–30; that stretch reads SPSLSSETIANDTIGNDNNVNE. Residue N19 is glycosylated (N-linked (GlcNAc...) asparagine). The next 12 membrane-spanning stretches (helical) occupy residues 98 to 118, 135 to 155, 167 to 187, 195 to 215, 227 to 247, 254 to 274, 337 to 357, 367 to 387, 410 to 430, 438 to 458, 468 to 488, and 503 to 523; these read WAFV…SSAY, VATL…LIWA, FFFT…AGSI, FLTG…IADM, MFSG…GFLG, WLHG…TVFI, IYIS…PIVF, IGGL…ISFA, LPPA…FAWT, IVPI…FMAL, IFAA…GAAF, and WASS…FLFY. The disordered stretch occupies residues 570–593; sequence THNSHASAAHSHGHRRSLSYTRSV.

This sequence belongs to the major facilitator superfamily. DHA1 family. Polyamines/proton antiporter (TC 2.A.1.2.16) subfamily.

It is found in the cell membrane. Efflux pump involved in export of fusaric acid, a mycotoxin with low to moderate toxicity to animals and humans, but with high phytotoxic properties. Constitutes a self-protecting mechanism of the fungus against critical levels of FSA within the cell. This chain is Efflux pump FUBT, found in Fusarium oxysporum (Fusarium vascular wilt).